Reading from the N-terminus, the 502-residue chain is UDP-N-acetylmuramoylalanine--D-glutamate ligase (502 aa).

129-135 (GTNGKTT) is a binding site for ATP. Positions 288-307 (APDETTSRRRKRDGAHTPDI) are disordered.

It belongs to the MurCDEF family.

It is found in the cytoplasm. The catalysed reaction is UDP-N-acetyl-alpha-D-muramoyl-L-alanine + D-glutamate + ATP = UDP-N-acetyl-alpha-D-muramoyl-L-alanyl-D-glutamate + ADP + phosphate + H(+). The protein operates within cell wall biogenesis; peptidoglycan biosynthesis. Its function is as follows. Cell wall formation. Catalyzes the addition of glutamate to the nucleotide precursor UDP-N-acetylmuramoyl-L-alanine (UMA). This Burkholderia ambifaria (strain ATCC BAA-244 / DSM 16087 / CCUG 44356 / LMG 19182 / AMMD) (Burkholderia cepacia (strain AMMD)) protein is UDP-N-acetylmuramoylalanine--D-glutamate ligase.